Consider the following 232-residue polypeptide: Large ribosomal subunit protein uL1 (232 aa).

It belongs to the universal ribosomal protein uL1 family. In terms of assembly, part of the 50S ribosomal subunit.

Its function is as follows. Binds directly to 23S rRNA. The L1 stalk is quite mobile in the ribosome, and is involved in E site tRNA release. Functionally, protein L1 is also a translational repressor protein, it controls the translation of the L11 operon by binding to its mRNA. The polypeptide is Large ribosomal subunit protein uL1 (Burkholderia cenocepacia (strain ATCC BAA-245 / DSM 16553 / LMG 16656 / NCTC 13227 / J2315 / CF5610) (Burkholderia cepacia (strain J2315))).